The primary structure comprises 202 residues: Cold-regulated 413 plasma membrane protein 4 (202 aa).

The Extracellular segment spans residues Met1–Gly42. A helical membrane pass occupies residues Val43–Ile63. Residues Leu64–Lys72 lie on the Cytoplasmic side of the membrane. Residues Met73–Phe93 traverse the membrane as a helical segment. At Phe94–Asp97 the chain is on the extracellular side. Residues Phe98–Pro118 traverse the membrane as a helical segment. Position 119 (Glu119) is a topological domain, cytoplasmic. The chain crosses the membrane as a helical span at residues Trp120–Trp140. Residues Thr141–Ser145 are Extracellular-facing. Residues Trp146–Ala166 traverse the membrane as a helical segment. The Cytoplasmic portion of the chain corresponds to Ser167–Ser181. Residues Asn182–Phe202 traverse the membrane as a helical segment.

Belongs to the Cold-regulated 413 protein family.

The protein resides in the cell membrane. The sequence is that of Cold-regulated 413 plasma membrane protein 4 from Arabidopsis thaliana (Mouse-ear cress).